The following is a 101-amino-acid chain: Small ribosomal subunit protein uS14 (101 aa).

This sequence belongs to the universal ribosomal protein uS14 family. In terms of assembly, part of the 30S ribosomal subunit. Contacts proteins S3 and S10.

Binds 16S rRNA, required for the assembly of 30S particles and may also be responsible for determining the conformation of the 16S rRNA at the A site. The chain is Small ribosomal subunit protein uS14 from Francisella philomiragia subsp. philomiragia (strain ATCC 25017 / CCUG 19701 / FSC 153 / O#319-036).